Reading from the N-terminus, the 674-residue chain is Protein kinase C delta type (674 aa).

The C2 domain occupies 1 to 106 (MAPFLRISFN…KNNGKAEFWL (106 aa)). Residues Thr-43 and Thr-50 each carry the phosphothreonine modification. Position 64 is a phosphotyrosine (Tyr-64). At Ser-130 the chain carries Phosphoserine. A Phosphothreonine modification is found at Thr-141. Tyr-155 is subject to Phosphotyrosine. The segment at 158–208 (NHEFIATFFGQPTFCSVCKEFVWGLNKQGYKCRQCNAAIHKKCIDKIIGRC) adopts a Phorbol-ester/DAG-type 1 zinc-finger fold. At Thr-218 the chain carries Phosphothreonine. The Phorbol-ester/DAG-type 2 zinc finger occupies 230–280 (PHRFKVYNYMSPTFCDHCGSLLWGLVKQGLKCEDCGMNVHHKCREKVANLC). A Phosphoserine; by autocatalysis modification is found at Ser-299. Residues Tyr-311 and Tyr-332 each carry the phosphotyrosine; by SRC modification. The region spanning 347 to 601 (FTFQKVLGKG…TGNIRIHPFF (255 aa)) is the Protein kinase domain. 353–361 (LGKGSFGKV) contributes to the ATP binding site. Tyr-372 carries the post-translational modification Phosphotyrosine. Lys-376 serves as a coordination point for ATP. Thr-449 carries the post-translational modification Phosphothreonine. Residue Asp-471 is the Proton acceptor of the active site. Phosphoserine is present on Ser-504. Residue Thr-505 is modified to Phosphothreonine; by autocatalysis. Tyr-565 is modified (phosphotyrosine). The AGC-kinase C-terminal domain occupies 602–673 (KTINWSLLEK…VNPKFEQFLD (72 aa)). Residues Ser-643, Ser-652, and Ser-662 each carry the phosphoserine modification.

Belongs to the protein kinase superfamily. AGC Ser/Thr protein kinase family. PKC subfamily. Interacts with PDPK1 (via N-terminal region). Interacts with RAD9A. Interacts with CDCP1. Interacts with MUC1. Interacts with VASP. Interacts with CAVIN3. Interacts with PRKD2 (via N-terminus and zing-finger domain 1 and 2) in response to oxidative stress; the interaction is independent of PRKD2 tyrosine phosphorylation. Interacts with PLSC3; interaction is enhanced by UV irradiation. Autophosphorylated and/or phosphorylated at Thr-505, within the activation loop; phosphorylation at Thr-505 is not a prerequisite for enzymatic activity. Autophosphorylated at Ser-299. Upon TNFSF10/TRAIL treatment, phosphorylated at Tyr-155; phosphorylation is required for its translocation to the endoplasmic reticulum and cleavage by caspase-3. Phosphorylated at Tyr-311, Tyr-332 and Tyr-565; phosphorylation of Tyr-311 and Tyr-565 following thrombin or zymosan stimulation potentiates its kinase activity. Phosphorylated by protein kinase PDPK1; phosphorylation is inhibited by the apoptotic C-terminal cleavage product of PKN2. Phosphorylated at Tyr-311 through a SYK and SRC mechanism downstream of C-type lectin receptors activation, promoting its activation. Post-translationally, proteolytically cleaved into a catalytic subunit and a regulatory subunit by caspase-3 during apoptosis which results in kinase activation. Isoform 1 is highly expressed in developing pro- and pre-B-cells and moderately in mature T-cells. Isoform 2 is highly expressed in testis and ovary and at a lower level in thymocytes, brain and kidney.

It localises to the cytoplasm. Its subcellular location is the perinuclear region. The protein localises to the nucleus. The protein resides in the cell membrane. It is found in the mitochondrion. It localises to the endomembrane system. The catalysed reaction is L-seryl-[protein] + ATP = O-phospho-L-seryl-[protein] + ADP + H(+). It carries out the reaction L-threonyl-[protein] + ATP = O-phospho-L-threonyl-[protein] + ADP + H(+). The enzyme catalyses L-tyrosyl-[protein] + ATP = O-phospho-L-tyrosyl-[protein] + ADP + H(+). Its activity is regulated as follows. Novel PKCs (PRKCD, PRKCE, PRKCH and PRKCQ) are calcium-insensitive, but activated by diacylglycerol (DAG) and phosphatidylserine. Three specific sites; Thr-505 (activation loop of the kinase domain), Ser-643 (turn motif) and Ser-662 (hydrophobic region), need to be phosphorylated for its full activation. Activated by caspase-3 (CASP3) cleavage during apoptosis. After cleavage, the pseudosubstrate motif in the regulatory subunit is released from the substrate recognition site of the catalytic subunit, which enables PRKCD to become constitutively activated. The catalytic subunit which displays properties of a sphingosine-dependent protein kinase is activated by D-erythro-sphingosine (Sph) or N,N-dimethyl-D-erythrosphingosine (DMS) or N,N,N-trimethyl-D-erythrosphingosine (TMS), but not by ceramide or Sph-1-P and is strongly inhibited by phosphatidylserine. Its function is as follows. Calcium-independent, phospholipid- and diacylglycerol (DAG)-dependent serine/threonine-protein kinase that plays contrasting roles in cell death and cell survival by functioning as a pro-apoptotic protein during DNA damage-induced apoptosis, but acting as an anti-apoptotic protein during cytokine receptor-initiated cell death, is involved in tumor suppression, is required for oxygen radical production by NADPH oxidase and acts as a positive or negative regulator in platelet functional responses. Negatively regulates B cell proliferation and also has an important function in self-antigen induced B cell tolerance induction. Upon DNA damage, activates the promoter of the death-promoting transcription factor BCLAF1/Btf to trigger BCLAF1-mediated p53/TP53 gene transcription and apoptosis. In response to oxidative stress, interact with and activate CHUK/IKKA in the nucleus, causing the phosphorylation of p53/TP53. In the case of ER stress or DNA damage-induced apoptosis, can form a complex with the tyrosine-protein kinase ABL1 which trigger apoptosis independently of p53/TP53. In cytosol can trigger apoptosis by activating MAPK11 or MAPK14, inhibiting AKT1 and decreasing the level of X-linked inhibitor of apoptosis protein (XIAP), whereas in nucleus induces apoptosis via the activation of MAPK8 or MAPK9. Upon ionizing radiation treatment, is required for the activation of the apoptosis regulators BAX and BAK, which trigger the mitochondrial cell death pathway. Can phosphorylate MCL1 and target it for degradation which is sufficient to trigger for BAX activation and apoptosis. Is required for the control of cell cycle progression both at G1/S and G2/M phases. Mediates phorbol 12-myristate 13-acetate (PMA)-induced inhibition of cell cycle progression at G1/S phase by up-regulating the CDK inhibitor CDKN1A/p21 and inhibiting the cyclin CCNA2 promoter activity. In response to UV irradiation can phosphorylate CDK1, which is important for the G2/M DNA damage checkpoint activation. Can protect glioma cells from the apoptosis induced by TNFSF10/TRAIL, probably by inducing increased phosphorylation and subsequent activation of AKT1. Can also act as tumor suppressor upon mitogenic stimulation with PMA or TPA. In N-formyl-methionyl-leucyl-phenylalanine (fMLP)-treated cells, is required for NCF1 (p47-phox) phosphorylation and activation of NADPH oxidase activity, and regulates TNF-elicited superoxide anion production in neutrophils, by direct phosphorylation and activation of NCF1 or indirectly through MAPK1/3 (ERK1/2) signaling pathways. Involved in antifungal immunity by mediating phosphorylation and activation of CARD9 downstream of C-type lectin receptors activation, promoting interaction between CARD9 and BCL10, followed by activation of NF-kappa-B and MAP kinase p38 pathways. May also play a role in the regulation of NADPH oxidase activity in eosinophil after stimulation with IL5, leukotriene B4 or PMA. In collagen-induced platelet aggregation, acts a negative regulator of filopodia formation and actin polymerization by interacting with and negatively regulating VASP phosphorylation. Downstream of PAR1, PAR4 and CD36/GP4 receptors, regulates differentially platelet dense granule secretion; acts as a positive regulator in PAR-mediated granule secretion, whereas it negatively regulates CD36/GP4-mediated granule release. Phosphorylates MUC1 in the C-terminal and regulates the interaction between MUC1 and beta-catenin. The catalytic subunit phosphorylates 14-3-3 proteins (YWHAB, YWHAZ and YWHAH) in a sphingosine-dependent fashion. Phosphorylates ELAVL1 in response to angiotensin-2 treatment. Phosphorylates mitochondrial phospholipid scramblase 3 (PLSCR3), resulting in increased cardiolipin expression on the mitochondrial outer membrane which facilitates apoptosis. Phosphorylates SMPD1 which induces SMPD1 secretion. This Mus musculus (Mouse) protein is Protein kinase C delta type.